Here is a 321-residue protein sequence, read N- to C-terminus: Aspartate carbamoyltransferase catalytic subunit (321 aa).

The carbamoyl phosphate site is built by Arg-65 and Thr-66. Lys-93 contributes to the L-aspartate binding site. Carbamoyl phosphate is bound by residues Arg-115, His-143, and Gln-146. L-aspartate-binding residues include Arg-176 and Arg-230. Residues Gly-271 and Pro-272 each coordinate carbamoyl phosphate.

Belongs to the aspartate/ornithine carbamoyltransferase superfamily. ATCase family. In terms of assembly, heterododecamer (2C3:3R2) of six catalytic PyrB chains organized as two trimers (C3), and six regulatory PyrI chains organized as three dimers (R2).

The enzyme catalyses carbamoyl phosphate + L-aspartate = N-carbamoyl-L-aspartate + phosphate + H(+). The protein operates within pyrimidine metabolism; UMP biosynthesis via de novo pathway; (S)-dihydroorotate from bicarbonate: step 2/3. Catalyzes the condensation of carbamoyl phosphate and aspartate to form carbamoyl aspartate and inorganic phosphate, the committed step in the de novo pyrimidine nucleotide biosynthesis pathway. The polypeptide is Aspartate carbamoyltransferase catalytic subunit (Bartonella bacilliformis (strain ATCC 35685 / KC583 / Herrer 020/F12,63)).